Reading from the N-terminus, the 233-residue chain is Large ribosomal subunit protein uL3 (233 aa).

The protein belongs to the universal ribosomal protein uL3 family. In terms of assembly, part of the 50S ribosomal subunit. Forms a cluster with proteins L14 and L19.

One of the primary rRNA binding proteins, it binds directly near the 3'-end of the 23S rRNA, where it nucleates assembly of the 50S subunit. The chain is Large ribosomal subunit protein uL3 from Ureaplasma urealyticum serovar 10 (strain ATCC 33699 / Western).